Reading from the N-terminus, the 385-residue chain is S-adenosylmethionine synthase (385 aa).

H16 provides a ligand contact to ATP. Position 18 (D18) interacts with Mg(2+). E44 contacts K(+). L-methionine is bound by residues E57 and Q100. The tract at residues 100 to 110 (QSPDINQGVDR) is flexible loop. Residues 164–166 (DGK), 230–231 (KF), D239, 245–246 (RK), A262, and K266 contribute to the ATP site. Residue D239 coordinates L-methionine. Position 270 (K270) interacts with L-methionine.

The protein belongs to the AdoMet synthase family. Homotetramer; dimer of dimers. It depends on Mg(2+) as a cofactor. The cofactor is K(+).

It localises to the cytoplasm. It carries out the reaction L-methionine + ATP + H2O = S-adenosyl-L-methionine + phosphate + diphosphate. It participates in amino-acid biosynthesis; S-adenosyl-L-methionine biosynthesis; S-adenosyl-L-methionine from L-methionine: step 1/1. Catalyzes the formation of S-adenosylmethionine (AdoMet) from methionine and ATP. The overall synthetic reaction is composed of two sequential steps, AdoMet formation and the subsequent tripolyphosphate hydrolysis which occurs prior to release of AdoMet from the enzyme. The protein is S-adenosylmethionine synthase of Helicobacter pylori (strain J99 / ATCC 700824) (Campylobacter pylori J99).